Reading from the N-terminus, the 249-residue chain is Microvitellogenin (249 aa).

Residues Met-1–Ala-17 form the signal peptide.

Functionally, small vitellogenic protein found in females. It is synthesized in the fat body, secreted into the hemolymph, and taken up by developing oocytes. The chain is Microvitellogenin (MVG) from Manduca sexta (Tobacco hawkmoth).